The chain runs to 84 residues: Cytochrome b559 subunit alpha (84 aa).

The chain crosses the membrane as a helical span at residues 21–35 (VIHSITIPSLFIAGW). A heme-binding site is contributed by H23.

This sequence belongs to the PsbE/PsbF family. As to quaternary structure, heterodimer of an alpha subunit and a beta subunit. PSII is composed of 1 copy each of membrane proteins PsbA, PsbB, PsbC, PsbD, PsbE, PsbF, PsbH, PsbI, PsbJ, PsbK, PsbL, PsbM, PsbT, PsbX, PsbY, PsbZ, Psb30/Ycf12, at least 3 peripheral proteins of the oxygen-evolving complex and a large number of cofactors. It forms dimeric complexes. The cofactor is heme b.

Its subcellular location is the plastid membrane. Functionally, this b-type cytochrome is tightly associated with the reaction center of photosystem II (PSII). PSII is a light-driven water:plastoquinone oxidoreductase that uses light energy to abstract electrons from H(2)O, generating O(2) and a proton gradient subsequently used for ATP formation. It consists of a core antenna complex that captures photons, and an electron transfer chain that converts photonic excitation into a charge separation. The polypeptide is Cytochrome b559 subunit alpha (Cuscuta gronovii (Common dodder)).